The following is a 263-amino-acid chain: Interleukin-22 receptor subunit alpha-2 (263 aa).

Positions Met1 to Gly21 are cleaved as a signal peptide. 3 consecutive Fibronectin type-III domains span residues His26–Phe68, Gly100–Asp161, and Pro162–Pro263. A glycan (N-linked (GlcNAc...) asparagine) is linked at Asn56. Residues Cys110 and Cys118 are joined by a disulfide bond. Asn166, Asn171, Asn192, and Asn209 each carry an N-linked (GlcNAc...) asparagine glycan. Cys238 and Cys259 form a disulfide bridge.

The protein belongs to the type II cytokine receptor family. In terms of tissue distribution, expressed in placenta, spleen, breast, skin and lung. Also detected in intestinal tract, testis, brain, heart and thymus. No expression found in prostate, bladder, kidney, ovary, muscle, bone marrow, liver and uterus. Isoform 1 is expressed only in placenta. Isoform 2 is expressed in placenta and breast and at lower level in spleen, skin, thymus and stomach.

The protein resides in the secreted. Its function is as follows. Isoform 2 is a receptor for IL22. Binds to IL22, prevents interaction with the functional IL-22R complex and blocks the activity of IL22 (in vitro). May play an important role as an IL22 antagonist in the regulation of inflammatory responses. Functionally, isoform 1 may play a role in establishing and maintaining successful pregnancy. The sequence is that of Interleukin-22 receptor subunit alpha-2 (IL22RA2) from Homo sapiens (Human).